The following is a 191-amino-acid chain: Protein GrpE (191 aa).

Residues 1–10 show a composition bias toward basic and acidic residues; the sequence is MNHEEQKVEA. Positions 1–28 are disordered; sequence MNHEEQKVEAMEQVEAQPVEPTDVDSEV.

This sequence belongs to the GrpE family. As to quaternary structure, homodimer.

Its subcellular location is the cytoplasm. In terms of biological role, participates actively in the response to hyperosmotic and heat shock by preventing the aggregation of stress-denatured proteins, in association with DnaK and GrpE. It is the nucleotide exchange factor for DnaK and may function as a thermosensor. Unfolded proteins bind initially to DnaJ; upon interaction with the DnaJ-bound protein, DnaK hydrolyzes its bound ATP, resulting in the formation of a stable complex. GrpE releases ADP from DnaK; ATP binding to DnaK triggers the release of the substrate protein, thus completing the reaction cycle. Several rounds of ATP-dependent interactions between DnaJ, DnaK and GrpE are required for fully efficient folding. The polypeptide is Protein GrpE (Aeromonas hydrophila subsp. hydrophila (strain ATCC 7966 / DSM 30187 / BCRC 13018 / CCUG 14551 / JCM 1027 / KCTC 2358 / NCIMB 9240 / NCTC 8049)).